The following is a 493-amino-acid chain: Transcript termination protein A18 (493 aa).

One can recognise a Helicase ATP-binding domain in the interval 100–256 (MIELKRPLYI…NSIINIAKLS (157 aa)). Residue 113-120 (LACGFGKT) participates in ATP binding. The DESH box signature appears at 206–209 (DESH). The region spanning 309–456 (ILDTLVEEFK…IISLSVDKLG (148 aa)) is the Helicase C-terminal domain.

Belongs to the helicase family. Poxviruses subfamily. Interacts with G2. Might be part of a transcription complex composed at least of G2, A18, and H5.

The protein resides in the virion. In terms of biological role, DNA helicase which seems to act as a postreplicative transcription termination factor. Involved in ATP-dependent release of nascent RNA. Forms a stable complex with single-stranded DNA, and to a lesser extent RNA. The protein is Transcript termination protein A18 of Mus musculus (Mouse).